The following is a 363-amino-acid chain: Aminomethyltransferase (363 aa).

This sequence belongs to the GcvT family. As to quaternary structure, the glycine cleavage system is composed of four proteins: P, T, L and H.

The enzyme catalyses N(6)-[(R)-S(8)-aminomethyldihydrolipoyl]-L-lysyl-[protein] + (6S)-5,6,7,8-tetrahydrofolate = N(6)-[(R)-dihydrolipoyl]-L-lysyl-[protein] + (6R)-5,10-methylene-5,6,7,8-tetrahydrofolate + NH4(+). In terms of biological role, the glycine cleavage system catalyzes the degradation of glycine. This chain is Aminomethyltransferase, found in Thioalkalivibrio sulfidiphilus (strain HL-EbGR7).